Here is a 481-residue protein sequence, read N- to C-terminus: Glutamyl-tRNA(Gln) amidotransferase subunit A (481 aa).

Catalysis depends on charge relay system residues Lys-75 and Ser-150. Ser-174 serves as the catalytic Acyl-ester intermediate.

It belongs to the amidase family. GatA subfamily. In terms of assembly, heterotrimer of A, B and C subunits.

It carries out the reaction L-glutamyl-tRNA(Gln) + L-glutamine + ATP + H2O = L-glutaminyl-tRNA(Gln) + L-glutamate + ADP + phosphate + H(+). Functionally, allows the formation of correctly charged Gln-tRNA(Gln) through the transamidation of misacylated Glu-tRNA(Gln) in organisms which lack glutaminyl-tRNA synthetase. The reaction takes place in the presence of glutamine and ATP through an activated gamma-phospho-Glu-tRNA(Gln). The sequence is that of Glutamyl-tRNA(Gln) amidotransferase subunit A from Macrococcus caseolyticus (strain JCSC5402) (Macrococcoides caseolyticum).